Reading from the N-terminus, the 130-residue chain is Small ribosomal subunit protein uS11 (130 aa).

A compositionally biased stretch (basic residues) spans 1-15 (MARPTKKSGPRKQKR). The segment at 1 to 21 (MARPTKKSGPRKQKRNVPSGV) is disordered.

Belongs to the universal ribosomal protein uS11 family. As to quaternary structure, part of the 30S ribosomal subunit. Interacts with proteins S7 and S18. Binds to IF-3.

Located on the platform of the 30S subunit, it bridges several disparate RNA helices of the 16S rRNA. Forms part of the Shine-Dalgarno cleft in the 70S ribosome. The chain is Small ribosomal subunit protein uS11 from Synechococcus elongatus (strain ATCC 33912 / PCC 7942 / FACHB-805) (Anacystis nidulans R2).